The sequence spans 434 residues: Glycoprotein U20 (434 aa).

Positions 1-15 are cleaved as a signal peptide; that stretch reads MITVFVACLFQCVSS. Residues 322–342 form a helical membrane-spanning segment; sequence LLWIFIVIPIAAGCMFLYILT.

It is found in the host endoplasmic reticulum membrane. The protein resides in the host lysosome membrane. In terms of biological role, plays a role in the down-regulation of the host stress-induced NKG2D ligand UBPL1, which enables immune cells expressing the NKG2D receptor to recognize and annihilate infected cells prior to viral spread. This Human herpesvirus 6B (strain Z29) (HHV-6 variant B) protein is Glycoprotein U20 (U20).